Here is a 31-residue protein sequence, read N- to C-terminus: QRTNDFIKACGRELVRVWVEICGSVSWGRTA.

Position 1 is a pyrrolidone carboxylic acid (Gln-1).

The protein belongs to the insulin family. As to quaternary structure, heterodimer of a B chain and an A chain linked by two disulfide bonds.

The protein localises to the secreted. Relaxin is an ovarian hormone that acts with estrogen to produce dilatation of the birth canal in many mammals. In Phocoenoides dalli dalli (Dall's porpoise), this protein is Relaxin B chain.